We begin with the raw amino-acid sequence, 331 residues long: UPF0194 membrane protein YbhG (331 aa).

A signal peptide spans 1–15 (MKKPVVIGLAVVVLA). Residues 107–208 (EEIAQAAAAV…LNLQDSTLIA (102 aa)) are a coiled coil.

This sequence belongs to the UPF0194 family.

It localises to the periplasm. This is UPF0194 membrane protein YbhG from Escherichia coli O157:H7 (strain EC4115 / EHEC).